Reading from the N-terminus, the 267-residue chain is Eukaryotic translation initiation factor 3 subunit J (267 aa).

Disordered regions lie at residues 1 to 118 (MAPS…DLKH) and 221 to 241 (MREE…KTKV). Residues 28-46 (DEEEEDVLDSWDAAEDSEV) show a composition bias toward acidic residues. A coiled-coil region spans residues 44–99 (SEVEREKAAKAAAAAAKAEAEAAAKKKSKAQRIEERKQERKKLAEANESDEDSEED). Residues 74 to 88 (QRIEERKQERKKLAE) show a composition bias toward basic and acidic residues. Residues 90-100 (NESDEDSEEDE) are compositionally biased toward acidic residues. Basic and acidic residues-rich tracts occupy residues 108 to 118 (RRTEKEGDLKH) and 221 to 231 (MREERAADKGN).

Belongs to the eIF-3 subunit J family. As to quaternary structure, component of the eukaryotic translation initiation factor 3 (eIF-3) complex.

The protein localises to the cytoplasm. Functionally, component of the eukaryotic translation initiation factor 3 (eIF-3) complex, which is involved in protein synthesis of a specialized repertoire of mRNAs and, together with other initiation factors, stimulates binding of mRNA and methionyl-tRNAi to the 40S ribosome. The eIF-3 complex specifically targets and initiates translation of a subset of mRNAs involved in cell proliferation. This chain is Eukaryotic translation initiation factor 3 subunit J (hcr1), found in Aspergillus fumigatus (strain CBS 144.89 / FGSC A1163 / CEA10) (Neosartorya fumigata).